Reading from the N-terminus, the 86-residue chain is Putative membrane protein insertion efficiency factor (86 aa).

The protein belongs to the UPF0161 family.

The protein resides in the cell inner membrane. In terms of biological role, could be involved in insertion of integral membrane proteins into the membrane. This Pseudomonas aeruginosa (strain UCBPP-PA14) protein is Putative membrane protein insertion efficiency factor.